Here is a 110-residue protein sequence, read N- to C-terminus: Glycine cleavage system H-like protein (110 aa).

The 88-residue stretch at 10-97 folds into the Lipoyl-binding domain; that stretch reads VEKVGDLYVF…PEENWLFKLD (88 aa). Asp-27 bears the ADP-ribosyl aspartic acid mark. Lys-56 bears the N6-lipoyllysine mark.

As to quaternary structure, lipoylated GcvH-L directly interacts with SAV0325, which reverses the SirTM-mediated mono-ADP-ribosylation of GcvH-L, and with the oxidoreductase SAV0322. In terms of processing, is lipoylated on K-56 by LplA2 (SAV0327) and then mono-ADP-ribosylated, probably on D-27, by SirTM (SAV0326). The mono-ADP-ribosylation state of GcvH-L might regulate the availability of the lipoyl moiety for redox reactions; ADP-ribosylation would inhibit the interaction of the oxidoreductase with GcvH-L when it is not required, thus ADP-ribosylation of GcvH-L might be acting to keep the response 'off' under non-stress conditions.

Its function is as follows. May act as a carrier protein for the ROS scavenging lipoyl moiety and/or as a substrate for oxidoreductases such as SAV0322 and SAV0323. This chain is Glycine cleavage system H-like protein, found in Staphylococcus aureus (strain Mu50 / ATCC 700699).